The following is a 264-amino-acid chain: Thymidylate synthase (264 aa).

A dUMP-binding site is contributed by arginine 21. Histidine 51 contributes to the (6R)-5,10-methylene-5,6,7,8-tetrahydrofolate binding site. 126-127 is a dUMP binding site; the sequence is RR. Cysteine 146 serves as the catalytic Nucleophile. DUMP is bound by residues 166 to 169, asparagine 177, and 207 to 209; these read RSCD and HLY. (6R)-5,10-methylene-5,6,7,8-tetrahydrofolate is bound at residue aspartate 169. A (6R)-5,10-methylene-5,6,7,8-tetrahydrofolate-binding site is contributed by alanine 263.

It belongs to the thymidylate synthase family. Bacterial-type ThyA subfamily. In terms of assembly, homodimer.

Its subcellular location is the cytoplasm. The enzyme catalyses dUMP + (6R)-5,10-methylene-5,6,7,8-tetrahydrofolate = 7,8-dihydrofolate + dTMP. The protein operates within pyrimidine metabolism; dTTP biosynthesis. In terms of biological role, catalyzes the reductive methylation of 2'-deoxyuridine-5'-monophosphate (dUMP) to 2'-deoxythymidine-5'-monophosphate (dTMP) while utilizing 5,10-methylenetetrahydrofolate (mTHF) as the methyl donor and reductant in the reaction, yielding dihydrofolate (DHF) as a by-product. This enzymatic reaction provides an intracellular de novo source of dTMP, an essential precursor for DNA biosynthesis. This is Thymidylate synthase from Shewanella baltica (strain OS223).